The primary structure comprises 434 residues: Trigger factor (434 aa).

A PPIase FKBP-type domain is found at 161 to 246 (EDRVTIDFTG…LKKVEERELP (86 aa)).

The protein belongs to the FKBP-type PPIase family. Tig subfamily.

Its subcellular location is the cytoplasm. The enzyme catalyses [protein]-peptidylproline (omega=180) = [protein]-peptidylproline (omega=0). In terms of biological role, involved in protein export. Acts as a chaperone by maintaining the newly synthesized protein in an open conformation. Functions as a peptidyl-prolyl cis-trans isomerase. The chain is Trigger factor from Pectobacterium carotovorum subsp. carotovorum (strain PC1).